A 205-amino-acid polypeptide reads, in one-letter code: Ribosomal RNA small subunit methyltransferase G (205 aa).

S-adenosyl-L-methionine is bound by residues glycine 76, leucine 81, 127 to 128, and arginine 140; that span reads IE.

The protein belongs to the methyltransferase superfamily. RNA methyltransferase RsmG family.

It is found in the cytoplasm. The catalysed reaction is guanosine(527) in 16S rRNA + S-adenosyl-L-methionine = N(7)-methylguanosine(527) in 16S rRNA + S-adenosyl-L-homocysteine. Functionally, specifically methylates the N7 position of guanine in position 527 of 16S rRNA. The protein is Ribosomal RNA small subunit methyltransferase G of Francisella tularensis subsp. holarctica (strain FTNF002-00 / FTA).